Here is a 103-residue protein sequence, read N- to C-terminus: Nucleoid-associated protein Adeh_3636 (103 aa).

Belongs to the YbaB/EbfC family. In terms of assembly, homodimer.

The protein localises to the cytoplasm. It is found in the nucleoid. Binds to DNA and alters its conformation. May be involved in regulation of gene expression, nucleoid organization and DNA protection. This Anaeromyxobacter dehalogenans (strain 2CP-C) protein is Nucleoid-associated protein Adeh_3636.